Consider the following 253-residue polypeptide: Tryptophan synthase alpha chain (253 aa).

Residues glutamate 46 and aspartate 57 each act as proton acceptor in the active site.

This sequence belongs to the TrpA family. As to quaternary structure, tetramer of two alpha and two beta chains.

It carries out the reaction (1S,2R)-1-C-(indol-3-yl)glycerol 3-phosphate + L-serine = D-glyceraldehyde 3-phosphate + L-tryptophan + H2O. It participates in amino-acid biosynthesis; L-tryptophan biosynthesis; L-tryptophan from chorismate: step 5/5. Functionally, the alpha subunit is responsible for the aldol cleavage of indoleglycerol phosphate to indole and glyceraldehyde 3-phosphate. In Dictyoglomus thermophilum (strain ATCC 35947 / DSM 3960 / H-6-12), this protein is Tryptophan synthase alpha chain.